We begin with the raw amino-acid sequence, 258 residues long: uncharacterized protein (258 aa).

Transmembrane regions (helical) follow at residues 14-34, 53-73, 110-130, 185-205, and 238-258; these read LAFPWLSAVILNSFLLALAAI, VIIWAALGWRGYLVVLAYFFV, AALCALAIAFGPEPWQLWLAL, GLALAVLGYGVGLISFGGIIF, and GINTFLGAAIAIGIEATAQLI.

This sequence belongs to the TMEM19 family.

The protein localises to the cell membrane. This is an uncharacterized protein from Synechocystis sp. (strain ATCC 27184 / PCC 6803 / Kazusa).